The primary structure comprises 1459 residues: Endogenous retrovirus group K member 7 Pol protein (1459 aa).

One can recognise a Reverse transcriptase domain in the interval 57 to 245; it reads LEKGHIEPSF…TPFHYLGMQI (189 aa). The LPQG signature appears at 161–164; that stretch reads LPQG. The short motif at 195-198 is the YXDD element; that stretch reads YIDD. An RNase H type-1 domain is found at 460–590; sequence LENALTVFTD…ADLLVSSALI (131 aa). 4 residues coordinate Mg(2+): Asp469, Glu497, Asp517, and Asp582. The Integrase-type zinc finger occupies 587-628; sequence SALIKAQELHALTHVNAAGLKNKFDVTWKQAKDIVQHCTQCQ. Positions 596, 600, 624, and 627 each coordinate Zn(2+). The Integrase catalytic domain maps to 642–803; it reads RGLCPNALWQ…TSAEQHLTGK (162 aa). The segment at residues 811-859 is a DNA-binding region (integrase-type); that stretch reads KLIWWKDNKNKTWEIGKVITWGRGFACVSPGENQLPVWIPTRHLKFYNE.

This sequence belongs to the beta type-B retroviral polymerase family. HERV class-II K(HML-2) pol subfamily.

The catalysed reaction is DNA(n) + a 2'-deoxyribonucleoside 5'-triphosphate = DNA(n+1) + diphosphate. It carries out the reaction Endonucleolytic cleavage to 5'-phosphomonoester.. Early post-infection, the reverse transcriptase converts the viral RNA genome into double-stranded viral DNA. The RNase H domain of the reverse transcriptase performs two functions. It degrades the RNA template and specifically removes the RNA primer from the RNA/DNA hybrid. Following nuclear import, the integrase catalyzes the insertion of the linear, double-stranded viral DNA into the host cell chromosome. Endogenous Pol proteins may have kept, lost or modified their original function during evolution. The protein is Endogenous retrovirus group K member 7 Pol protein (ERVK-7) of Homo sapiens (Human).